The chain runs to 427 residues: MEKKAFFQQLDERTDIRYTDSGMKIIRLKFPRAHLRLCNVKIDFGSRDVCLQAESGDTLLPYGTAHFLEHLLFWHNGRNLYTDFFAHGALLNAFTTYTDTNFMFTSLPDRLRQTIPILLDALWNHSFDKKMITQEKAVITSEIQTAHLNHQLYYHYQLISMLSPASPAAVFPAGRIEDIEALDIRDLQKAYNAAYQPQRMTLFLIGGSEDTEALLPPHLRLEKRPNHKAERKIISACPPPALSQKMVLGNEERIEDTWTGLQVGAIPGQNNLLTLKLYWDIASRILFQLDSPFFQEIQQTYRLEIDCLSAEAHMYEDGGFLILHSQGAHSSAYIDVASYYVTQQKQQIETWLQYGKDSLTDAIIYDSDYVRKCFEWAAECDRCDCTFLDMYRIIHDMNSQDFLSLIDALASSKKAVIHVSQKEAIGQ.

Residue His-66 participates in Zn(2+) binding. The active-site Proton acceptor is Glu-69. Residues His-70 and Glu-142 each contribute to the Zn(2+) site.

This sequence belongs to the peptidase M16 family. Zn(2+) is required as a cofactor.

Its function is as follows. Required for production of the bacteriocin subtilosin. Could catalyze some step in the processing of presubtilosin. In Bacillus subtilis, this protein is Putative zinc protease AlbF (albF).